The chain runs to 509 residues: GMP synthase [glutamine-hydrolyzing] (509 aa).

The Glutamine amidotransferase type-1 domain maps to 4-194; it reads LVLVVDFGGQ…LYNICGLENS (191 aa). The active-site Nucleophile is C81. Active-site residues include H168 and E170. The GMPS ATP-PPase domain maps to 195–384; the sequence is WSMASFAEEK…LGIPHHLVWR (190 aa). Position 222–228 (222–228) interacts with ATP; the sequence is SGGVDSS.

Homodimer.

It catalyses the reaction XMP + L-glutamine + ATP + H2O = GMP + L-glutamate + AMP + diphosphate + 2 H(+). Its pathway is purine metabolism; GMP biosynthesis; GMP from XMP (L-Gln route): step 1/1. Its function is as follows. Catalyzes the synthesis of GMP from XMP. The chain is GMP synthase [glutamine-hydrolyzing] from Clostridium perfringens (strain 13 / Type A).